The following is a 288-amino-acid chain: Homoserine kinase (288 aa).

P79–A89 provides a ligand contact to ATP.

Belongs to the GHMP kinase family. Homoserine kinase subfamily.

It is found in the cytoplasm. The catalysed reaction is L-homoserine + ATP = O-phospho-L-homoserine + ADP + H(+). It participates in amino-acid biosynthesis; L-threonine biosynthesis; L-threonine from L-aspartate: step 4/5. Functionally, catalyzes the ATP-dependent phosphorylation of L-homoserine to L-homoserine phosphate. The protein is Homoserine kinase of Listeria monocytogenes serotype 4b (strain F2365).